The chain runs to 286 residues: NAD kinase (286 aa).

Asp-74 functions as the Proton acceptor in the catalytic mechanism. NAD(+) is bound by residues 74 to 75 (DG), 148 to 149 (ND), Asp-178, Ala-186, 189 to 194 (TAYNLS), and Gln-244.

This sequence belongs to the NAD kinase family. The cofactor is a divalent metal cation.

Its subcellular location is the cytoplasm. It carries out the reaction NAD(+) + ATP = ADP + NADP(+) + H(+). Involved in the regulation of the intracellular balance of NAD and NADP, and is a key enzyme in the biosynthesis of NADP. Catalyzes specifically the phosphorylation on 2'-hydroxyl of the adenosine moiety of NAD to yield NADP. This chain is NAD kinase, found in Campylobacter jejuni subsp. doylei (strain ATCC BAA-1458 / RM4099 / 269.97).